The following is a 220-amino-acid chain: UPF0319 protein YccT (220 aa).

Residues 1–20 (MKTGIVTTLIALCLPVSVFA) form the signal peptide.

The protein belongs to the UPF0319 family.

In Escherichia coli O139:H28 (strain E24377A / ETEC), this protein is UPF0319 protein YccT.